Reading from the N-terminus, the 79-residue chain is UPF0154 protein llmg_1186 (79 aa).

Residues 4–24 traverse the membrane as a helical segment; sequence ILAILLMVVCLLAGFFLGTWF.

The protein belongs to the UPF0154 family.

It is found in the cell membrane. The sequence is that of UPF0154 protein llmg_1186 from Lactococcus lactis subsp. cremoris (strain MG1363).